A 212-amino-acid chain; its full sequence is Small ribosomal subunit protein uS5 (212 aa).

Residues 48 to 111 (LEDEVLDINM…DIAKLNIIDV (64 aa)) form the S5 DRBM domain.

The protein belongs to the universal ribosomal protein uS5 family. In terms of assembly, part of the 30S ribosomal subunit. Contacts protein S4.

Its function is as follows. With S4 and S12 plays an important role in translational accuracy. The chain is Small ribosomal subunit protein uS5 from Haloarcula marismortui (strain ATCC 43049 / DSM 3752 / JCM 8966 / VKM B-1809) (Halobacterium marismortui).